A 1298-amino-acid chain; its full sequence is Phosphoribosylformylglycinamidine synthase (1298 aa).

The segment at Phe303 to Lys327 is disordered. Residues Gly305 to Asp316, Thr384 to Tyr386, and Ala676 each bind ATP. Mg(2+) contacts are provided by Asp677, Glu716, Asn720, and Asp884. An ATP-binding site is contributed by Ser886. Residues Val1045–Asn1298 form the Glutamine amidotransferase type-1 domain. Cys1138 functions as the Nucleophile in the catalytic mechanism. Active-site residues include His1263 and Glu1265.

The protein in the N-terminal section; belongs to the FGAMS family. As to quaternary structure, monomer.

It localises to the cytoplasm. The catalysed reaction is N(2)-formyl-N(1)-(5-phospho-beta-D-ribosyl)glycinamide + L-glutamine + ATP + H2O = 2-formamido-N(1)-(5-O-phospho-beta-D-ribosyl)acetamidine + L-glutamate + ADP + phosphate + H(+). It participates in purine metabolism; IMP biosynthesis via de novo pathway; 5-amino-1-(5-phospho-D-ribosyl)imidazole from N(2)-formyl-N(1)-(5-phospho-D-ribosyl)glycinamide: step 1/2. In terms of biological role, phosphoribosylformylglycinamidine synthase involved in the purines biosynthetic pathway. Catalyzes the ATP-dependent conversion of formylglycinamide ribonucleotide (FGAR) and glutamine to yield formylglycinamidine ribonucleotide (FGAM) and glutamate. The chain is Phosphoribosylformylglycinamidine synthase from Pseudomonas syringae pv. tomato (strain ATCC BAA-871 / DC3000).